Here is a 105-residue protein sequence, read N- to C-terminus: Large ribosomal subunit protein uL24 (105 aa).

The interval 67–105 (HISNLNPVDPKTGKATRIGRRKSSEGTLVRYSKKSGEEI) is disordered.

Belongs to the universal ribosomal protein uL24 family. As to quaternary structure, part of the 50S ribosomal subunit.

One of two assembly initiator proteins, it binds directly to the 5'-end of the 23S rRNA, where it nucleates assembly of the 50S subunit. In terms of biological role, one of the proteins that surrounds the polypeptide exit tunnel on the outside of the subunit. The sequence is that of Large ribosomal subunit protein uL24 from Bacteroides thetaiotaomicron (strain ATCC 29148 / DSM 2079 / JCM 5827 / CCUG 10774 / NCTC 10582 / VPI-5482 / E50).